The primary structure comprises 177 residues: MSRIGKRAVAIPSGVEAKIDNGTLTVKGPKGTLSLGLSDLIDYKIEGDEIAVNPANDTQKARSYWGMQRTLVSNLVEGVTEGFSKTLEISGVGYRAQAQGKTLKLQLGYSHDVDIAVPEGLEVKTPDQTTVIISGIDKQAVGQLAAEIRQWRKPEPYKGKGIKYQGEYVFRKEGKKK.

The protein belongs to the universal ribosomal protein uL6 family. As to quaternary structure, part of the 50S ribosomal subunit.

This protein binds to the 23S rRNA, and is important in its secondary structure. It is located near the subunit interface in the base of the L7/L12 stalk, and near the tRNA binding site of the peptidyltransferase center. This chain is Large ribosomal subunit protein uL6, found in Erythrobacter litoralis (strain HTCC2594).